We begin with the raw amino-acid sequence, 81 residues long: Photosystem I iron-sulfur center (81 aa).

4Fe-4S ferredoxin-type domains follow at residues 2 to 31 (SHSVKIYDTCIGCTHCVRACPTDVLEMIPW) and 39 to 68 (IASAPRTEDCVGCKRCESACPTDFLSVRVY). The [4Fe-4S] cluster site is built by Cys-11, Cys-14, Cys-17, Cys-21, Cys-48, Cys-51, Cys-54, and Cys-58.

As to quaternary structure, the eukaryotic PSI reaction center is composed of at least 11 subunits. Requires [4Fe-4S] cluster as cofactor.

The protein localises to the plastid. It is found in the chloroplast thylakoid membrane. It catalyses the reaction reduced [plastocyanin] + hnu + oxidized [2Fe-2S]-[ferredoxin] = oxidized [plastocyanin] + reduced [2Fe-2S]-[ferredoxin]. Its function is as follows. Apoprotein for the two 4Fe-4S centers FA and FB of photosystem I (PSI); essential for photochemical activity. FB is the terminal electron acceptor of PSI, donating electrons to ferredoxin. The C-terminus interacts with PsaA/B/D and helps assemble the protein into the PSI complex. Required for binding of PsaD and PsaE to PSI. PSI is a plastocyanin-ferredoxin oxidoreductase, converting photonic excitation into a charge separation, which transfers an electron from the donor P700 chlorophyll pair to the spectroscopically characterized acceptors A0, A1, FX, FA and FB in turn. The polypeptide is Photosystem I iron-sulfur center (Zea mays (Maize)).